A 316-amino-acid chain; its full sequence is Probable cell division protein WhiA (316 aa).

Residues 275–309 constitute a DNA-binding region (H-T-H motif); the sequence is TLKELGEMVASGKISKSGINHRLRKLDEIAEQLRT.

The protein belongs to the WhiA family.

The protein localises to the cytoplasm. It is found in the nucleoid. Its function is as follows. Involved in cell division and chromosome segregation. May influence the activity of FtsZ. Binds DNA, but does not seem to function as a transcription factor. The protein is Probable cell division protein WhiA of Bacillus subtilis (strain 168).